The chain runs to 46 residues: Alpha-1-antiproteinase (46 aa).

Ser-30 is modified (phosphoserine).

Belongs to the serpin family. In terms of processing, N-glycosylated; contains bi- and triantennary glycans with a bisecting N-acetylglucosamine and fucose residue. In terms of tissue distribution, plasma.

The protein localises to the secreted. The protein is Alpha-1-antiproteinase of Notamacropus eugenii (Tammar wallaby).